A 149-amino-acid polypeptide reads, in one-letter code: Protegrin-5 (149 aa).

The first 29 residues, 1–29 (METQRASLCLGRWSLWLLLLGLVVPSASA), serve as a signal peptide directing secretion. The propeptide occupies 30-130 (QALSYREAVL…DITCNEVQGV (101 aa)). Positions 61 to 80 (DQPPKADEDPGTPKPVSFTV) are disordered. 4 cysteine pairs are disulfide-bonded: Cys85–Cys96, Cys107–Cys124, Cys136–Cys145, and Cys138–Cys143. Arg148 is subject to Arginine amide.

This sequence belongs to the cathelicidin family.

The protein localises to the secreted. Functionally, microbicidal activity. The sequence is that of Protegrin-5 (NPG5) from Sus scrofa (Pig).